The following is a 200-amino-acid chain: Small ribosomal subunit protein uS5 (200 aa).

The span at 1–12 (MGRPRTSQTRGQ) shows a compositional bias: polar residues. The segment at 1 to 49 (MGRPRTSQTRGQGPSGATGGNPRGGGSTTRERDARGARPGERDGGSEIQ) is disordered. Residues 13-27 (GPSGATGGNPRGGGS) are compositionally biased toward gly residues. The segment covering 29–49 (TRERDARGARPGERDGGSEIQ) has biased composition (basic and acidic residues). The 64-residue stretch at 48-111 (IQDRVVQIRR…EKARHAMFDV (64 aa)) folds into the S5 DRBM domain.

Belongs to the universal ribosomal protein uS5 family. Part of the 30S ribosomal subunit. Contacts proteins S4 and S8.

With S4 and S12 plays an important role in translational accuracy. Functionally, located at the back of the 30S subunit body where it stabilizes the conformation of the head with respect to the body. The protein is Small ribosomal subunit protein uS5 of Rubrobacter xylanophilus (strain DSM 9941 / JCM 11954 / NBRC 16129 / PRD-1).